The primary structure comprises 252 residues: Hydroxyacylglutathione hydrolase (252 aa).

Zn(2+) contacts are provided by H54, H56, D58, H59, H111, D128, and H166.

It belongs to the metallo-beta-lactamase superfamily. Glyoxalase II family. Monomer. The cofactor is Zn(2+).

It catalyses the reaction an S-(2-hydroxyacyl)glutathione + H2O = a 2-hydroxy carboxylate + glutathione + H(+). It functions in the pathway secondary metabolite metabolism; methylglyoxal degradation; (R)-lactate from methylglyoxal: step 2/2. Thiolesterase that catalyzes the hydrolysis of S-D-lactoyl-glutathione to form glutathione and D-lactic acid. This is Hydroxyacylglutathione hydrolase from Vibrio campbellii (strain ATCC BAA-1116).